Reading from the N-terminus, the 519-residue chain is Na(+)/H(+) exchange regulatory cofactor NHE-RF3 (519 aa).

A PDZ 1 domain is found at 9–90; sequence ECKLSKQEGQ…SVTLLVLDGD (82 aa). Serine 108, serine 148, serine 192, serine 250, serine 334, and serine 348 each carry phosphoserine. PDZ domains are found at residues 128–215 and 243–323; these read EPCA…VDKE and VVVI…LDKE. Residues 348–374 are disordered; it reads SVKEGPAPIPAPLEATGSEPTEDAEGH. Positions 378 to 458 constitute a PDZ 4 domain; it reads LCRLLKEDDS…HVTLLVCGKM (81 aa). 2 positions are modified to phosphothreonine: threonine 451 and threonine 488. Residues 479–519 form a disordered region; it reads VAGPDEKGETSAESEHDAHPAKDRTLSTASHSSSNSEDTEM. Residues 482–503 are compositionally biased toward basic and acidic residues; that stretch reads PDEKGETSAESEHDAHPAKDRT. Phosphoserine occurs at positions 489 and 492. Phosphothreonine is present on threonine 503. Residues 505-519 are compositionally biased toward low complexity; that stretch reads STASHSSSNSEDTEM. Residues serine 508, serine 510, serine 511, serine 512, and serine 514 each carry the phosphoserine modification.

Belongs to the NHER family. In terms of assembly, interacts with PDZK1IP1 and ABCC2. Binds to the C-terminal region of SLC26A3. Interacts (via C-terminal PDZ domain) with SLC26A6 (via C-terminal domain). Interacts (via C-terminal PDZ domain) with SLC9A3 (via C-terminal domain). Component of a complex, composed of PDZK1, SYNGAP1, KLHL17 and NMDA receptors. Interacts (via PDZ1 domain) directly with KLHL17; the interaction is important for integrity of actin cytoskeleton structures in neurons. Forms a heterodimeric complex with NHERF1. Interacts with AKAP2, BCR, CFTR, SLCO1A1, SLC22A12, SLC22A4, SLC22A5, SLC26A6, NHERF2 and SLC17A1. Interacts (via the first PDZ domain) with PTGIR (via non-isoprenylated C-terminus). Interacts (via PDZ domains 1 and 3) with SCARB1 (C-terminal domain). Interacts (via PDZ domains 1 and 3) with SLC5A8 (via PDZ-binding motif); interaction increases nicotinate transport activity of SLC5A8. As to expression, expressed in kidney, liver, small intestine. brain, lung, and testis (at protein level).

The protein resides in the membrane. Its subcellular location is the cell membrane. In terms of biological role, a scaffold protein that connects plasma membrane proteins and regulatory components, regulating their surface expression in epithelial cells apical domains. May be involved in the coordination of a diverse range of regulatory processes for ion transport and second messenger cascades. In complex with NHERF1, may cluster proteins that are functionally dependent in a mutual fashion and modulate the trafficking and the activity of the associated membrane proteins. May play a role in the cellular mechanisms associated with multidrug resistance through its interaction with ABCC2 and PDZK1IP1. May potentiate the CFTR chloride channel activity. Required for normal cell-surface expression of SCARB1. Plays a role in maintaining normal plasma cholesterol levels via its effects on SCARB1. Plays a role in the normal localization and function of the chloride-anion exchanger SLC26A6 to the plasma membrane in the brush border of the proximal tubule of the kidney. May be involved in the regulation of proximal tubular Na(+)-dependent inorganic phosphate cotransport therefore playing an important role in tubule function. This Mus musculus (Mouse) protein is Na(+)/H(+) exchange regulatory cofactor NHE-RF3 (Pdzk1).